Reading from the N-terminus, the 490-residue chain is Lipoprotein lipase (490 aa).

A signal peptide spans 1–25 (MERGRGMGKTALLAVLCLCLRGAAG). Positions 32 to 53 (MNFEGIESKFSLRTPAEPDEDV) are interaction with GPIHBP1. Cys54 and Cys67 form a disulfide bridge. A glycan (N-linked (GlcNAc...) (complex) asparagine) is linked at Asn70. Position 121 is a 3'-nitrotyrosine (Tyr121). The active-site Nucleophile is Ser159. Asp183 acts as the Charge relay system in catalysis. At Tyr191 the chain carries 3'-nitrotyrosine. Residues Ala194, Arg197, Ser199, and Asp202 each coordinate Ca(2+). An intrachain disulfide couples Cys243 to Cys266. The essential for determining substrate specificity stretch occupies residues 243-266 (CNLGEALRLIAEKGFSDVDQLVKC). His268 functions as the Charge relay system in the catalytic mechanism. 2 disulfide bridges follow: Cys291–Cys310 and Cys302–Cys305. The PLAT domain maps to 341–464 (FHYQVKIHFF…KGEEAAIFVK (124 aa)). Residue Tyr343 is modified to 3'-nitrotyrosine. Residues Asn354 and Asn386 are each glycosylated (N-linked (GlcNAc...) asparagine). Residues 417–421 (WSDWW) form an important for interaction with lipoprotein particles region. The tract at residues 430–434 (RVRVK) is important for heparin binding. 430 to 441 (RVRVKSGETQKK) serves as a coordination point for heparin. The segment at 443–467 (VFCSRDGSSRLGKGEEAAIFVKCLE) is interaction with GPIHBP1. A disulfide bond links Cys445 and Cys465. The disordered stretch occupies residues 471–490 (SRKRGGAKKASKENSAHESA). The span at 480 to 490 (ASKENSAHESA) shows a compositional bias: basic and acidic residues.

The protein belongs to the AB hydrolase superfamily. Lipase family. In terms of assembly, homodimer. Interacts with GPIHBP1 with 1:1 stoichiometry. Interacts with APOC2; the interaction activates LPL activity in the presence of lipids. Interaction with heparan sulfate proteoglycans is required to protect LPL against loss of activity. Associates with lipoprotein particles in blood plasma. Interacts with LMF1 and SEL1L; interaction with SEL1L is required to prevent aggregation of newly synthesized LPL in the endoplasmic reticulum (ER), and for normal export of LPL from the ER to the extracellular space. N-glycan at Asn-70 is a triantennary complex oligosaccharide containing sialic acid, galactose, mannose, and N-acetylglucosamine, the reducing GlcNAc being sulfated at C6. Post-translationally, tyrosine nitration after lipopolysaccharide (LPS) challenge down-regulates the lipase activity.

It localises to the cell membrane. The protein resides in the secreted. The protein localises to the extracellular space. It is found in the extracellular matrix. The enzyme catalyses a triacylglycerol + H2O = a diacylglycerol + a fatty acid + H(+). It carries out the reaction a 1,2-diacyl-sn-glycero-3-phosphocholine + H2O = a 2-acyl-sn-glycero-3-phosphocholine + a fatty acid + H(+). It catalyses the reaction 1,2,3-tri-(9Z-octadecenoyl)-glycerol + H2O = di-(9Z)-octadecenoylglycerol + (9Z)-octadecenoate + H(+). The catalysed reaction is 1,2-di-(9Z-octadecenoyl)-sn-glycero-3-phosphocholine + H2O = (9Z-octadecenoyl)-sn-glycero-3-phosphocholine + (9Z)-octadecenoate + H(+). The enzyme catalyses 1,2,3-tributanoylglycerol + H2O = dibutanoylglycerol + butanoate + H(+). It carries out the reaction 1,2-dihexadecanoyl-sn-glycero-3-phosphocholine + H2O = hexadecanoyl-sn-glycero-3-phosphocholine + hexadecanoate + H(+). With respect to regulation, ca(2+) binding promotes protein stability and formation of the active homodimer. Its function is as follows. Key enzyme in triglyceride metabolism. Catalyzes the hydrolysis of triglycerides from circulating chylomicrons and very low density lipoproteins (VLDL), and thereby plays an important role in lipid clearance from the blood stream, lipid utilization and storage. Although it has both phospholipase and triglyceride lipase activities it is primarily a triglyceride lipase with low but detectable phospholipase activity. Mediates margination of triglyceride-rich lipoprotein particles in capillaries. Recruited to its site of action on the luminal surface of vascular endothelium by binding to GPIHBP1 and cell surface heparan sulfate proteoglycans. The polypeptide is Lipoprotein lipase (LPL) (Gallus gallus (Chicken)).